The chain runs to 298 residues: MGCYNGSELQDLGCSSQLLLQPLWDTIRTREAFTRSPIFPVTFSIITYVGFCLPFVVLDVLYPWVPILRRYKIHPDFSPSVKQLLPCLGLTLYQHLVFVFPVTLLHWVRSPALLPQEAPELVQLLSHVLICLLLFDTEIFAWHLLHHKVPWLYRTFHKVHHQNSSSFALATQYMSFWELLSLTFFDVLNVAVLRCHPLTIFTFHVINIWLSVEDHSGYDFPWSTHRLVPFGWYGGVAHHDMHHSQFNCNFAPYFTHWDKMLGTLRSAPLPESLCACGERCVNSRERCAVHLIQKKKQT.

N-linked (GlcNAc...) asparagine glycosylation occurs at asparagine 5. Transmembrane regions (helical) follow at residues 38 to 58 (IFPV…FVVL), 88 to 108 (LGLT…LHWV), and 124 to 144 (LLSH…AWHL). The Fatty acid hydroxylase domain occupies 128 to 263 (VLICLLLFDT…FTHWDKMLGT (136 aa)). A Histidine box-1 motif is present at residues 142–146 (WHLLH). The Histidine box-2 motif lies at 157-161 (HKVHH). An N-linked (GlcNAc...) asparagine glycan is attached at asparagine 163. A Histidine box-3 motif is present at residues 238–244 (HHDMHHS).

Belongs to the sterol desaturase family. The cofactor is Fe cation. Post-translationally, N-glycosylated. In terms of tissue distribution, widely expressed at low level and at higher level in the lung. Weakly expressed in the heart, lung and kidney.

It is found in the endoplasmic reticulum membrane. It catalyses the reaction cholesterol + AH2 + O2 = 25-hydroxycholesterol + A + H2O. It carries out the reaction cholesterol + NADPH + O2 + H(+) = 25-hydroxycholesterol + NADP(+) + H2O. Catalyzes the formation of 25-hydroxycholesterol from cholesterol, leading to repress cholesterol biosynthetic enzymes. Plays a key role in cell positioning and movement in lymphoid tissues: 25-hydroxycholesterol is an intermediate in biosynthesis of 7-alpha,25-dihydroxycholesterol (7-alpha,25-OHC), an oxysterol that acts as a ligand for the G protein-coupled receptor GPR183/EBI2, a chemotactic receptor for a number of lymphoid cells. May play an important role in regulating lipid metabolism by synthesizing a corepressor that blocks sterol regulatory element binding protein (SREBP) processing. In testis, production of 25-hydroxycholesterol by macrophages may play a role in Leydig cell differentiation. Required to restrain inflammation in macrophages: production of 25-hydroxycholesterol protects macrophages from cholesterol overload, thereby preventing mitochondrial DNA release and subsequent activation of the AIM2 inflammasome. Interferon-stimulated gene which has broad antiviral activities against a wide range of enveloped viruses. In Mus musculus (Mouse), this protein is Cholesterol 25-hydroxylase.